A 530-amino-acid chain; its full sequence is Tetrahydroberberine oxidase (530 aa).

The first 24 residues, 1–24, serve as a signal peptide directing secretion; that stretch reads MSKMASSIFATFSLLSSLLPTSLA. Cysteines 36 and 94 form a disulfide. N-linked (GlcNAc...) asparagine glycosylation is present at Asn51. The FAD-binding PCMH-type domain maps to 72-246; sequence TTPKPNFIVT…LAWKIRLVPV (175 aa). A cross-link (6-(S-cysteinyl)-8alpha-(pros-histidyl)-FAD (His-Cys)) is located at residues 109-171; it reads HDFEGLSYVS…GVHAFPAGLC (63 aa). N-linked (GlcNAc...) asparagine glycosylation is present at Asn483.

It belongs to the oxygen-dependent FAD-linked oxidoreductase family. The cofactor is FAD. The FAD cofactor is bound via a bicovalent 6-S-cysteinyl, 8alpha-N1-histidyl FAD linkage.

The enzyme catalyses (S)-canadine + 2 O2 + H(+) = berberine + 2 H2O2. In terms of biological role, catalyzes the oxidation of different tetrahydroprotoberberines, such as (S)-canadine, (S)-scoulerine and (S)-corypalmine. Catalyzes the oxidation of (S)-coreximine and (S)-tetrahydropalmatine. Catalyzes the oxidation of different 1-benzylisoquinoline alkaloids, such as (S)-norreticuline, (S)-nororientaline, (S)-coclaurine and (S)-norisoorientaline. Exhibits strict specificity for the (S)-enantiomer of tetrahydroprotoberbirines and 1-benzylisoquinoline alkaloids. This is Tetrahydroberberine oxidase from Berberis wilsoniae (Mrs Wilson's barberry).